The following is a 769-amino-acid chain: MNEDKLESKWLFSLTESQKLYLLISLIINKKLPEAKFVYKLLDYTKGNWLSLLLRFLPETTDPECYIPYIDIDSHYGNIKASVNDIEPIVLPDEELCQLRLTNMKLWNCKLPSLKDEAEFYSLFSKKIVEETDLVDLAYQLTKNSQAPAEIQQWNSGTFTVFHKLSQFAAVPINLEEMEAATIRDVISLAFPVLDSKNCVFIMDEIITVFINNSSNDPNLISENWDFVWKKLLQLVKTDGLAVVHTLVLNWNTIEPKLFLKLAKVALASCYISDDSSLYSVSLARDITEAIQNKLNFSDVNFGDLLKKPHDFSADGLLSLQNDLTTPSSLSTSLLMEITKAIALLTQLKVPAPTFKTSVSISCSNFDSQIKYLENVLLNALGTIQSPDYKDWHDLYSYIERFKQLSLFFLNISEDAISVVFLKQMLQEKSFLALKQMRNEIGLKDIEPKVLIDCLKTSFYENFRAASNMNKNRGKLALACKVLDVFVDCEPTIDLRRRLNSLVNACSLIQPFKLILEPGKPLSPSLVEANLNPDKLIKTIFSQNPSAYTLYDDILALDIELHKAAGDFDYSQVFTELRRITEHMITLTIDVSLEKDDIEYAKQIVEDRLMTLAEASEDVKFFLYEIAYKIGKFPSNHPNAKVIRLDMLQIAIANAPRQKLDEVVSYWTDFQSNSKVLEENLNTTDVEFHSSKKIKDYEDLEDANFDEEWSKAADLMSDDPENQVLYEGNLNSSLSLNEDPSVSDENLTQKVTSKLTNGLGWVLGVPPRK.

Belongs to the SEC39 family. As to quaternary structure, component of a peripheral membrane protein complex consisting of dsl1, sec39 and tip20.

It is found in the endoplasmic reticulum membrane. Functionally, required for protein transport between the Golgi and the endoplasmic reticulum. May contribute to tethering of coatomer-coated retrograde transport vesicles to the ER membrane through interaction with and stabilization of the SNARE complex. The protein is Protein transport protein sec39 of Schizosaccharomyces pombe (strain 972 / ATCC 24843) (Fission yeast).